A 403-amino-acid polypeptide reads, in one-letter code: 4-hydroxyphenylpyruvate dioxygenase (403 aa).

VOC domains lie at G25–R169 and R201–K359. Residues H204, H287, and E370 each coordinate Fe cation.

It belongs to the 4HPPD family. As to quaternary structure, homodimer. Fe cation serves as cofactor.

It catalyses the reaction 3-(4-hydroxyphenyl)pyruvate + O2 = homogentisate + CO2. The protein operates within amino-acid degradation; L-phenylalanine degradation; acetoacetate and fumarate from L-phenylalanine: step 3/6. 4-hydroxyphenylpyruvate dioxygenase; part of the L-tyrosine degradation gene cluster that mediates the biosynthesis of the brownish pigment pyomelanin as an alternative melanin. The 4-hydroxyphenylpyruvate dioxygenase hppD catalyzes the conversion of 4-hydroxyphenylpyruvate to homogentisic acid (HGA). The protein hmgX is crucial for this conversion and thus, probably functions as an accessory factor to mediate specific activity of hppD. The homogentisate 1,2-dioxygenase hmgA is then involved in the cleavage of the aromatic ring of HGA and its conversion to 4-maleylacetoacetate. When hmgA activity is lowered by the cell wall integrity (CWI) signaling pathway, HGA accumulates and leads to the production of pyomelanin through benzoquinone acetic acid after oxidation and polymerization. On the opposite, in non-stress conditions, both hppD and hmgA activities are balanced and HGA is degraded into 4-maleylacetoacetate. 4-maleylacetoacetate is further converted to 4-fumarylacetoacetate by the maleylacetoacetate isomerase maiA, which is degraded into fumarate and acetoacetate by the fumarylacetoacetase fahA. The protein is 4-hydroxyphenylpyruvate dioxygenase of Aspergillus fumigatus (strain ATCC MYA-4609 / CBS 101355 / FGSC A1100 / Af293) (Neosartorya fumigata).